The sequence spans 455 residues: T-box protein VegT (455 aa).

A DNA-binding region (T-box) is located at residues 57-230; the sequence is LWAQFHQEGT…HNPFAKGFRE (174 aa). A compositionally biased stretch (basic and acidic residues) spans 229-241; that stretch reads REQERSHKRDDVL. Disordered regions lie at residues 229–276 and 295–360; these read REQE…RVKE and ANQG…PDSD. A compositionally biased stretch (polar residues) spans 308 to 326; it reads GANQEQQVPSSSSNFYNRN.

As to quaternary structure, forms a repression complex on the promoters of the nodal/nr1 and siamois genes with the maternal factors tcf7l1/tcf3 and pouf5.1/oct-25. Interacts (via C-terminus) with tcf7l1/tcf3 (via N-terminus). Also interacts with the other POU-domain transcription factors pou5f1.2/oct-91 and pou5f1.3/oct-60. In terms of tissue distribution, vegetally localized in oocytes and expressed in the presumptive endoderm and mesoderm at early gastrula stage. Expression is down-regulated in the endoderm by the end of gastrulation but maintained in the lateral and ventral mesoderm of the blastopore lip.

It localises to the nucleus. Transcription factor required for both mesoderm and endoderm formation in the embryo; signaling determinants and concentration levels may determine which germ layer is formed. Acts together with beta-catenin to activate genes that are responsible for mesoderm induction including wnt-8, eomes t/bra, siamois, mix1 and sox17. Directly binds to promoter DNA. Patterns the mesoderm along the dorsoventral and posterior axis. Activates siamois gene transcription when alone or in combination with beta-catenin, but inhibits siamois transcription in combination with pou5f1.1/oct-25. This is T-box protein VegT from Xenopus tropicalis (Western clawed frog).